We begin with the raw amino-acid sequence, 300 residues long: Tyrosine recombinase XerC (300 aa).

Positions 2-88 constitute a Core-binding (CB) domain; sequence TQEGKLEQQF…SLRSFYTFLL (87 aa). Residues 109 to 294 form the Tyr recombinase domain; the sequence is RLPKFFYSEE…TKEHLKSTYM (186 aa). Catalysis depends on residues Arg-150, Lys-174, His-246, Arg-249, and His-272. The O-(3'-phospho-DNA)-tyrosine intermediate role is filled by Tyr-281.

It belongs to the 'phage' integrase family. XerC subfamily. In terms of assembly, forms a cyclic heterotetrameric complex composed of two molecules of XerC and two molecules of XerD.

The protein localises to the cytoplasm. Functionally, site-specific tyrosine recombinase, which acts by catalyzing the cutting and rejoining of the recombining DNA molecules. The XerC-XerD complex is essential to convert dimers of the bacterial chromosome into monomers to permit their segregation at cell division. It also contributes to the segregational stability of plasmids. The sequence is that of Tyrosine recombinase XerC from Listeria welshimeri serovar 6b (strain ATCC 35897 / DSM 20650 / CCUG 15529 / CIP 8149 / NCTC 11857 / SLCC 5334 / V8).